The chain runs to 330 residues: G-protein coupled bile acid receptor 1 (330 aa).

Residues 1 to 19 (MTPNSTGEVPSPIPKGALG) lie on the Extracellular side of the membrane. N4 carries N-linked (GlcNAc...) asparagine glycosylation. The chain crosses the membrane as a helical span at residues 20 to 40 (LSLALASLIITANLLLALGIA). Over 41–50 (WDRRLRSPPA) the chain is Cytoplasmic. The helical transmembrane segment at 51 to 71 (GCFFLSLLLAGLLTGLALPTL) threads the bilayer. Topologically, residues 72 to 85 (PGLWNQSRRGYWSC) are extracellular. N76 carries N-linked (GlcNAc...) asparagine glycosylation. C85 and C155 are oxidised to a cystine. The chain crosses the membrane as a helical span at residues 86–106 (LLVYLAPNFSFLSLLANLLLV). The Cytoplasmic portion of the chain corresponds to 107–125 (HGERYMAVLRPLQPPGSIR). A helical transmembrane segment spans residues 126–146 (LALLLTWAGPLLFASLPALGW). Residues 147-165 (NHWTPGANCSSQAIFPAPY) lie on the Extracellular side of the membrane. Residues 166–186 (LYLEVYGLLLPAVGAAAFLSV) traverse the membrane as a helical segment. Over 187–228 (RVLATAHRQLQDICRLERAVCRDEPSALARALTWRQARAQAG) the chain is Cytoplasmic. A helical membrane pass occupies residues 229–249 (AMLLFGLCWGPYVATLLLSVL). Residues 250 to 261 (AYEQRPPLGPGT) lie on the Extracellular side of the membrane. Residues 262 to 282 (LLSLLSLGSASAAAVPVAMGL) traverse the membrane as a helical segment. Topologically, residues 283–330 (GDQRYTAPWRAAAQRCLQGLWGRASRDSPGPSIAYHPSSQSSVDLDLN) are cytoplasmic. The disordered stretch occupies residues 309–330 (DSPGPSIAYHPSSQSSVDLDLN). Residues 319–330 (PSSQSSVDLDLN) show a composition bias toward polar residues.

It belongs to the G-protein coupled receptor 1 family. As to expression, ubiquitously expressed. Expressed at higher level in spleen and placenta. Expressed at lower level in other tissues. In digestive tissues, it is expressed in stomach, duodenum, ileocecum, ileum, jejunum, ascending colon, transverse colon, descending colon, cecum and liver, but not in esophagus and rectum.

It localises to the cell membrane. In terms of biological role, receptor for bile acid. Bile acid-binding induces its internalization, activation of extracellular signal-regulated kinase and intracellular cAMP production. May be involved in the suppression of macrophage functions by bile acids. The polypeptide is G-protein coupled bile acid receptor 1 (GPBAR1) (Homo sapiens (Human)).